An 85-amino-acid chain; its full sequence is Phosphocarrier protein HPr (85 aa).

Residues 1–85 (MFQRDIKITT…DLAKFLTTLK (85 aa)) enclose the HPr domain. His-15 functions as the Pros-phosphohistidine intermediate in the catalytic mechanism.

Belongs to the HPr family.

It localises to the cytoplasm. In terms of biological role, general (non sugar-specific) component of the phosphoenolpyruvate-dependent sugar phosphotransferase system (sugar PTS). This major carbohydrate active-transport system catalyzes the phosphorylation of incoming sugar substrates concomitantly with their translocation across the cell membrane. The phosphoryl group from phosphoenolpyruvate (PEP) is transferred to the phosphoryl carrier protein HPr by enzyme I. Phospho-HPr then transfers it to the PTS EIIA domain. In Buchnera aphidicola subsp. Baizongia pistaciae (strain Bp), this protein is Phosphocarrier protein HPr (ptsH).